Here is a 1072-residue protein sequence, read N- to C-terminus: Neurofilament heavy polypeptide (1072 aa).

Residue Ser-74 is modified to Phosphoserine. Residues 94–409 (EKEQLQALND…KLLEGEECRI (316 aa)) form the IF rod domain. 3 coiled-coil regions span residues 98-132 (LQAL…LRQQ), 174-222 (IAHV…LQEE), and 293-380 (LDRL…QLRE). Positions 278–643 (TVQSTLQSEE…AKSPAEAKSP (366 aa)) are 55 X 6 AA approximate tandem repeats of K-S-P-[VAGSE]-[KEVTSGA]-[EAVK]. Residues Ser-343, Ser-414, and Ser-417 each carry the phosphoserine modification. The tract at residues 454 to 1072 (EEQTEEIQVT…PEDKAAKGDK (619 aa)) is disordered. The segment covering 455-487 (EQTEEIQVTEEVTEEEDKEAQGEEEEEAEEGGE) has biased composition (acidic residues). Residues 488–499 (EAATTSPPAEEA) show a composition bias toward low complexity. Phosphoserine is present on Ser-501. The segment covering 501–584 (SPEKETKSPV…KSPAEAKSPA (84 aa)) has biased composition (basic and acidic residues). 36 repeat units span residues 507-512 (KSPVKE), 515-520 (KSPAEA), 521-526 (KSPAEA), 527-532 (KSPAEA), 533-538 (KSPAEV), 539-544 (KSPAEV), 545-550 (KSPAEA), 551-556 (KSPAEA), 557-562 (KSPAEV), 563-568 (KSPAEV), 569-574 (KSPAEA), 575-580 (KSPAEA), 581-586 (KSPAEV), 587-592 (KSPATV), 593-598 (KSPGEA), 599-604 (KSPAEA), 605-610 (KSPAEV), 611-616 (KSPVEA), 617-622 (KSPAEA), 623-628 (KSPASV), 629-634 (KSPGEA), 635-640 (KSPAEA), 641-646 (KSPAEV), 647-652 (KSPATV), 653-658 (KSPVEA), 659-664 (KSPAEV), 665-670 (KSPVTV), 671-676 (KSPAEA), 677-682 (KSPVEV), 683-688 (KSPASV), 689-694 (KSPSEA), 695-700 (KSPAGA), 701-706 (KSPAEA), 707-712 (KSPVVA), 713-718 (KSPAEA), and 719-724 (KSPAEA). Phosphoserine occurs at positions 516, 522, 528, 534, 540, 546, 552, 558, 564, 570, 576, 582, 588, 594, 600, 606, 612, 618, 624, 627, 630, 636, 642, 648, 654, 660, 666, 672, 678, 684, 687, 690, 696, 702, 708, 714, and 720. Over residues 600-620 (SPAEAKSPAEVKSPVEAKSPA) the composition is skewed to basic and acidic residues. The segment covering 621–631 (EAKSPASVKSP) has biased composition (low complexity). The segment covering 720-774 (SPAEAKPPAEAKSPAEAKSPAEAKSPAEAKSPAEAKSPVEVKSPEKAKSPVKEGA) has biased composition (basic and acidic residues). Residues 725–730 (KPPAEA) form a 37; approximate repeat. A run of 7 repeats spans residues 731–736 (KSPAEA), 737–742 (KSPAEA), 743–748 (KSPAEA), 749–754 (KSPAEA), 755–760 (KSPVEV), 761–766 (KSPEKA), and 767–772 (KSPVKE). Phosphoserine is present on residues Ser-732, Ser-738, Ser-744, Ser-750, Ser-756, and Ser-762. A 45; approximate repeat occupies 775 to 780 (KSLAEA). 3 positions are modified to phosphoserine: Ser-776, Ser-782, and Ser-788. 2 repeat units span residues 781–786 (KSPEKA) and 787–792 (KSPVKE). Composition is skewed to basic and acidic residues over residues 781–953 (KSPE…KAAA) and 963–1072 (GVKE…KGDK). The 48; approximate repeat unit spans residues 795-800 (KPPAEV). 4 tandem repeats follow at residues 801–806 (KSPEKA), 807–812 (KSPMKE), 815–820 (KSPEKA), and 826–831 (KSPEAK). Phosphoserine occurs at positions 802, 808, 816, and 827. A Phosphothreonine modification is found at Thr-832. Phosphoserine is present on residues Ser-846, Ser-852, Ser-860, Ser-880, and Ser-937. 3 repeat units span residues 851-856 (KSPAKE), 859-864 (KSPEKE), and 879-884 (KSPVEE).

It belongs to the intermediate filament family. As to quaternary structure, forms heterodimers with NEFL; which can further hetero-oligomerize (in vitro). Forms heterodimers with INA (in vitro). Post-translationally, there are a number of repeats of the tripeptide K-S-P, NFH is phosphorylated on a number of the serines in this motif. It is thought that phosphorylation of NFH results in the formation of interfilament cross bridges that are important in the maintenance of axonal caliber. In terms of processing, phosphorylation seems to play a major role in the functioning of the larger neurofilament polypeptides (NF-M and NF-H), the levels of phosphorylation being altered developmentally and coincidentally with a change in the neurofilament function. Phosphorylated in the head and rod regions by the PKC kinase PKN1, leading to the inhibition of polymerization. As to expression, expressed in the dorsal root ganglion neurons (at protein level). Expressed in cutaneous and muscular sensory neurons.

The protein resides in the cytoplasm. Its subcellular location is the cytoskeleton. It is found in the cell projection. It localises to the axon. Functionally, neurofilaments usually contain three intermediate filament proteins: NEFL, NEFM, and NEFH which are involved in the maintenance of neuronal caliber. NEFH has an important function in mature axons that is not subserved by the two smaller NEF proteins. May additionally cooperate with the neuronal intermediate filament proteins PRPH and INA to form neuronal filamentous networks. This chain is Neurofilament heavy polypeptide (Nefh), found in Rattus norvegicus (Rat).